The sequence spans 45 residues: Large ribosomal subunit protein bL36 (45 aa).

The interval 1-20 is disordered; the sequence is MKVSSSIKADPSKGDKLVRR.

This sequence belongs to the bacterial ribosomal protein bL36 family.

The sequence is that of Large ribosomal subunit protein bL36 from Chlamydia abortus (strain DSM 27085 / S26/3) (Chlamydophila abortus).